The sequence spans 397 residues: Oxysterol-binding protein homolog C354.07c (397 aa).

N-linked (GlcNAc...) asparagine glycosylation is found at asparagine 186 and asparagine 195.

Belongs to the OSBP family.

It is found in the endoplasmic reticulum. This Schizosaccharomyces pombe (strain 972 / ATCC 24843) (Fission yeast) protein is Oxysterol-binding protein homolog C354.07c.